We begin with the raw amino-acid sequence, 448 residues long: Packaging protein 1 (448 aa).

The segment at 1–76 is disordered; sequence METKGRRSAA…SQPAKRGGLL (76 aa). The span at 22 to 31 shows a compositional bias: basic residues; sequence PRKRPTRRAP. Residues 56-67 show a composition bias toward polar residues; that stretch reads RPSSDSLLQEPS. 171-178 provides a ligand contact to ATP; sequence GPTGCGKS. Residues 440–448 are DNA-binding; the sequence is RAYRARKIK.

Belongs to the adenoviridae packaging protein 1 family. Homodimer. Part of a genome packaging complex composed of packaging proteins 1, 2 and 3; this complex specifically binds to the packaging sequence on the left end of viral genomic DNA and performs packaging of the viral genome. Interacts with protein 33K.

The protein resides in the virion. It is found in the host nucleus. Its subcellular location is the host nucleoplasm. The protein localises to the host nucleolus. Component of the packaging machinery which encapsidates the viral DNA into preformed capsids and transcriptional activator of the viral major late promoter (MLP). Binds, along with packaging proteins 2 and 3, to the specific packaging sequence on the left end of viral genomic DNA and displays ATPase activity thereby providing the power stroke of the packaging machinery. The activity of packaging protein IVa2 is stimulated by protein 33K which acts as a terminase. May be the protein that pumps DNA into the capsid powered by ATP hydrolysis. Specifically binds to the 5'-CG-3' nucleotides of the repeats making up the packaging sequence. Component of the DEF-A and DEF-B transcription factors that bind downstream elements of the major late promoter (MLP), and stimulate transcription from the MLP after initiation of viral DNA replication. DEF-A is a heterodimer packaging proteins 1 and 2 and DEF-B is a homodimer of packaging protein 1. The chain is Packaging protein 1 from Human adenovirus B serotype 7 (HAdV-7).